Consider the following 484-residue polypeptide: Probable D-lactate dehydrogenase, mitochondrial (484 aa).

The N-terminal 52 residues, 1-52 (MAMLLRVATQRLSPWRSFCSRGSQGGLSQDFVEALKAVVGSPHVSTASAVRE), are a transit peptide targeting the mitochondrion. The residue at position 36 (Lys-36) is an N6-acetyllysine. In terms of domain architecture, FAD-binding PCMH-type spans 62–242 (RCQPPDAVVW…TSTTLRLHPA (181 aa)). Lys-292 is subject to N6-acetyllysine. Lys-335 bears the N6-acetyllysine; alternate mark. Lys-335 is modified (N6-succinyllysine; alternate). 2 positions are modified to N6-acetyllysine: Lys-422 and Lys-449.

Belongs to the FAD-binding oxidoreductase/transferase type 4 family. Interacts with CSRP3. FAD serves as cofactor. As to expression, readily detected in liver and kidney, with a weaker signal observed in heart, skeletal muscle, stomach, brain, and lung.

It is found in the mitochondrion. The enzyme catalyses (R)-lactate + 2 Fe(III)-[cytochrome c] = 2 Fe(II)-[cytochrome c] + pyruvate + 2 H(+). In terms of biological role, involved in D-lactate, but not L-lactate catabolic process. In Mus musculus (Mouse), this protein is Probable D-lactate dehydrogenase, mitochondrial.